The chain runs to 122 residues: Large ribosomal subunit protein bL12 (122 aa).

Belongs to the bacterial ribosomal protein bL12 family. In terms of assembly, homodimer. Part of the ribosomal stalk of the 50S ribosomal subunit. Forms a multimeric L10(L12)X complex, where L10 forms an elongated spine to which 2 to 4 L12 dimers bind in a sequential fashion. Binds GTP-bound translation factors.

Functionally, forms part of the ribosomal stalk which helps the ribosome interact with GTP-bound translation factors. Is thus essential for accurate translation. This is Large ribosomal subunit protein bL12 from Sodalis glossinidius (strain morsitans).